A 781-amino-acid chain; its full sequence is Isoquinoline 1-oxidoreductase subunit beta (781 aa).

Heterodimer of an alpha chain and a beta chain.

It carries out the reaction isoquinoline + A + H2O = isoquinolin-1(2H)-one + AH2. Specific towards N-containing N-heterocyclic substrates, including isoquinoline, isoquinolin-5-ol, phthalazine and quinazoline. In Brevundimonas diminuta (Pseudomonas diminuta), this protein is Isoquinoline 1-oxidoreductase subunit beta (iorB).